Reading from the N-terminus, the 429-residue chain is Adenylosuccinate synthetase (429 aa).

GTP is bound by residues 12-18 (GDEGKGK) and 40-42 (GHT). D13 (proton acceptor) is an active-site residue. Mg(2+) contacts are provided by D13 and G40. Residues 13-16 (DEGK), 38-41 (NAGH), T129, R143, Q223, T238, and R302 each bind IMP. The active-site Proton donor is the H41. 298 to 304 (TVTGRPR) is a substrate binding site. GTP contacts are provided by residues R304, 330-332 (KLD), and 412-414 (STS).

This sequence belongs to the adenylosuccinate synthetase family. As to quaternary structure, homodimer. Requires Mg(2+) as cofactor.

It localises to the cytoplasm. The enzyme catalyses IMP + L-aspartate + GTP = N(6)-(1,2-dicarboxyethyl)-AMP + GDP + phosphate + 2 H(+). It functions in the pathway purine metabolism; AMP biosynthesis via de novo pathway; AMP from IMP: step 1/2. In terms of biological role, plays an important role in the de novo pathway of purine nucleotide biosynthesis. Catalyzes the first committed step in the biosynthesis of AMP from IMP. The chain is Adenylosuccinate synthetase from Gluconobacter oxydans (strain 621H) (Gluconobacter suboxydans).